The primary structure comprises 309 residues: Olfactory receptor 5B21 (309 aa).

Residues 1–26 are Extracellular-facing; it reads MENSTEVTEFILLGLTDDPNLQIPLL. An N-linked (GlcNAc...) asparagine glycan is attached at asparagine 3. A helical transmembrane segment spans residues 27–47; the sequence is LAFLFIYLITLLGNGGMMVII. Topologically, residues 48-55 are cytoplasmic; it reads HSDSHLHT. Residues 56-76 traverse the membrane as a helical segment; sequence PMYFFLSNLSLVDLGYSSAVA. Residues 77–95 are Extracellular-facing; sequence PKTVAALRSGDKAISYDGC. Residues cysteine 95 and cysteine 177 are joined by a disulfide bond. The helical transmembrane segment at 96 to 116 threads the bilayer; sequence AAQFFFFVGFATVECYLLASM. Residues 117–137 lie on the Cytoplasmic side of the membrane; it reads AYDRHAAVCRPLHYTTTMTAG. The chain crosses the membrane as a helical span at residues 138 to 158; the sequence is VCALLATGSYVSGFLNASIHA. Residues 159–199 are Extracellular-facing; the sequence is AGTFRLSFCGSNEINHFFCDIPPLLALSCSDTRISKLVVFV. The helical transmembrane segment at 200–220 threads the bilayer; that stretch reads AGFNVFFTLLVILISYFFICI. Residues 221 to 235 are Cytoplasmic-facing; it reads TIQRMHSAEGQKKVF. Residues 236-256 traverse the membrane as a helical segment; that stretch reads STCASHLTALSIFYGTIIFMY. Residues 257–270 lie on the Extracellular side of the membrane; the sequence is LQPNSSQSVDTDKI. N-linked (GlcNAc...) asparagine glycosylation occurs at asparagine 260. Residues 271 to 291 form a helical membrane-spanning segment; that stretch reads ASVFYTVVIPMLNPLIYSLRN. The Cytoplasmic portion of the chain corresponds to 292–309; the sequence is KEVKSALWKILNKLYPQY.

It belongs to the G-protein coupled receptor 1 family.

The protein resides in the cell membrane. In terms of biological role, odorant receptor. The sequence is that of Olfactory receptor 5B21 from Homo sapiens (Human).